Consider the following 629-residue polypeptide: 1-deoxy-D-xylulose-5-phosphate synthase (629 aa).

Thiamine diphosphate is bound by residues H72 and 113–115 (GHS). Position 144 (D144) interacts with Mg(2+). Residues 145–146 (GA), N173, Y284, and E366 each bind thiamine diphosphate. Mg(2+) is bound at residue N173.

Belongs to the transketolase family. DXPS subfamily. In terms of assembly, homodimer. It depends on Mg(2+) as a cofactor. Thiamine diphosphate is required as a cofactor.

The enzyme catalyses D-glyceraldehyde 3-phosphate + pyruvate + H(+) = 1-deoxy-D-xylulose 5-phosphate + CO2. It participates in metabolic intermediate biosynthesis; 1-deoxy-D-xylulose 5-phosphate biosynthesis; 1-deoxy-D-xylulose 5-phosphate from D-glyceraldehyde 3-phosphate and pyruvate: step 1/1. In terms of biological role, catalyzes the acyloin condensation reaction between C atoms 2 and 3 of pyruvate and glyceraldehyde 3-phosphate to yield 1-deoxy-D-xylulose-5-phosphate (DXP). This is 1-deoxy-D-xylulose-5-phosphate synthase from Halalkalibacterium halodurans (strain ATCC BAA-125 / DSM 18197 / FERM 7344 / JCM 9153 / C-125) (Bacillus halodurans).